We begin with the raw amino-acid sequence, 480 residues long: RAC-alpha serine/threonine-protein kinase (480 aa).

One can recognise a PH domain in the interval 5–108; it reads AIVKEGWLHK…WATAIQTVAD (104 aa). An N6-acetyllysine mark is found at Lys14 and Lys20. Residue 14–19 coordinates 1D-myo-inositol 1,3,4,5-tetrakisphosphate; it reads KRGEYI. 1D-myo-inositol 1,3,4,5-tetrakisphosphate-binding positions include 23–25 and Asn53; that span reads RPR. Cys60 and Cys77 are disulfide-bonded. Position 86 (Arg86) interacts with 1D-myo-inositol 1,3,4,5-tetrakisphosphate. Residues 114–137 form a disordered region; it reads EEETMDFRSGSPSDNSGAEEMEVS. Ser124 is subject to Phosphoserine. Phosphoserine; alternate is present on residues Ser126 and Ser129. Ser126 and Ser129 each carry an O-linked (GlcNAc) serine; alternate glycan. Positions 150-408 constitute a Protein kinase domain; the sequence is FEYLKLLGKG…AKEIMQHRFF (259 aa). 156-164 provides a ligand contact to ATP; that stretch reads LGKGTFGKV. At Tyr176 the chain carries Phosphotyrosine; by TNK2. Lys179 provides a ligand contact to ATP. Asp274 serves as the catalytic Proton acceptor. A Glycyl lysine isopeptide (Lys-Gly) (interchain with G-Cter in ubiquitin) cross-link involves residue Lys284. Cys296 and Cys310 are oxidised to a cystine. Residue Thr305 is glycosylated (O-linked (GlcNAc) threonine). Residue Thr308 is modified to Phosphothreonine; by IKKE, PDPK1 and TBK1. O-linked (GlcNAc) threonine glycosylation is present at Thr312. In terms of domain architecture, AGC-kinase C-terminal spans 409–480; it reads ANIVWQDVYE…QFSYSASGTA (72 aa). Phosphothreonine is present on Thr448. Thr450 is subject to Phosphothreonine; by MTOR. The segment at 450–480 is disordered; it reads TPPDQDDSMECVDSERRPHFPQFSYSASGTA. Ser473 is a glycosylation site (O-linked (GlcNAc) serine; alternate). Ser473 is subject to Phosphoserine; by IKKE, MTOR, PRKDC and TBK1; alternate. The residue at position 474 (Tyr474) is a Phosphotyrosine. At Ser477 the chain carries Phosphoserine; by CDK2 and MTOR. Thr479 bears the Phosphothreonine; by CDK2 and MTOR mark.

This sequence belongs to the protein kinase superfamily. AGC Ser/Thr protein kinase family. RAC subfamily. As to quaternary structure, interacts with and phosphorylated by PDPK1. Interacts with AGAP2 (isoform 2/PIKE-A); the interaction occurs in the presence of guanine nucleotides. Interacts with AKTIP. Interacts (via PH domain) with MTCP1, TCL1A and TCL1B. Interacts with CDKN1B; the interaction phosphorylates CDKN1B promoting 14-3-3 binding and cell-cycle progression. Interacts with MAP3K5 and TRAF6. Interacts with BAD, PPP2R5B, STK3 and STK4. Interacts (via PH domain) with SIRT1. Interacts with SRPK2 in a phosphorylation-dependent manner. Interacts with TRIM13; the interaction ubiquitinates AKT1 leading to its proteasomal degradation. Interacts with RAF1. Interacts (via the C-terminus) with CCDC88A (via its C-terminus) and THEM4 (via its C-terminus). Interacts with GRB10; the interaction leads to GRB10 phosphorylation thus promoting YWHAE-binding. Interacts with KCTD20. Interacts with BTBD10. Interacts with PA2G4. Interacts with KIF14; the interaction is detected in the plasma membrane upon INS stimulation and promotes AKT1 phosphorylation. Interacts with FAM83B; activates the PI3K/AKT signaling cascade. Interacts with WDFY2 (via WD repeats 1-3). Forms a complex with WDFY2 and FOXO1. Interacts with FAM168A. Interacts with SYAP1 (via phosphorylated form and BSD domain); this interaction is enhanced in a mTORC2-mediated manner in response to epidermal growth factor (EGF) stimulation and activates AKT1. Interacts with PKHM3. Interacts with FKBP5/FKBP51; promoting interaction between Akt/AKT1 and PHLPP1, thereby enhancing dephosphorylation and subsequent activation of Akt/AKT1. Interacts with TMEM175; leading to formation of the lysoK(GF) complex. O-GlcNAcylation at Thr-305 and Thr-312 inhibits activating phosphorylation at Thr-308 via disrupting the interaction between AKT1 and PDPK1. O-GlcNAcylation at Ser-473 also probably interferes with phosphorylation at this site. Post-translationally, phosphorylation on Thr-308, Ser-473 and Tyr-474 is required for full activity. Phosphorylation of the activation loop at Thr-308 by PDPK1/PDK1 is a prerequisite for full activation. Phosphorylation by mTORC2 in response to growth factors plays a key role in AKT1 activation: mTORC2 phosphorylates different sites depending on the context, such as Thr-450, Ser-473, Ser-477 or Thr-479, thereby facilitating subsequent phosphorylation of the activation loop by PDPK1/PDK1. Phosphorylation at Ser-473 by mTORC2 promotes ubiquitination and degradation by the proteasome. Also phosphorylated at Ser-477 and Thr-479 by CDK2, facilitating subsequent phosphorylation of the activation loop by PDPK1/PDK1. Activated TNK2 phosphorylates it on Tyr-176 resulting in its binding to the anionic plasma membrane phospholipid PA. This phosphorylated form localizes to the cell membrane, where it is targeted by PDPK1 and PDPK2 for further phosphorylations on Thr-308 and Ser-473 leading to its activation. Phosphorylated at Thr-308 and Ser-473 by IKBKE and TBK1. Ser-473 phosphorylation is enhanced by interaction with AGAP2 isoform 2 (PIKE-A). Ser-473 phosphorylation is enhanced by signaling through activated FLT3. Ser-473 is dephosphorylated by PHLPP. Dephosphorylated at Thr-308 and Ser-473 by PP2A phosphatase. The phosphorylated form of PPP2R5B is required for bridging AKT1 with PP2A phosphatase. Ser-473 is dephosphorylated by CPPED1, leading to termination of signaling. AIM2 acts as an inhibitor of AKT1 by inhibiting phosphorylation Ser-473: AIM2 acts both by inhibiting the activity of PRKDC/DNA-PK kinase and promoting dephosphorylation by PP2A phosphatase. In terms of processing, ubiquitinated; undergoes both 'Lys-48'- and 'Lys-63'-linked polyubiquitination. TRAF6-induced 'Lys-63'-linked AKT1 ubiquitination is critical for phosphorylation and activation. When ubiquitinated, it translocates to the plasma membrane, where it becomes phosphorylated. When fully phosphorylated and translocated into the nucleus, undergoes 'Lys-48'-polyubiquitination catalyzed by TTC3, leading to its degradation by the proteasome. Also ubiquitinated by TRIM13 leading to its proteasomal degradation. Ubiquitinated via 'Lys-48'-linked polyubiquitination by ZNRF1, leading to its degradation by the proteasome. Phosphorylated, undergoes 'Lys-48'-linked polyubiquitination preferentially at Lys-284 catalyzed by MUL1, leading to its proteasomal degradation. Acetylated on Lys-14 and Lys-20 by the histone acetyltransferases EP300 and KAT2B. Acetylation results in reduced phosphorylation and inhibition of activity. Deacetylated at Lys-14 and Lys-20 by SIRT1. SIRT1-mediated deacetylation relieves the inhibition. Post-translationally, cleavage by caspase-3/CASP3. Cleaved at the caspase-3 consensus site Asp-462 during apoptosis, resulting in down-regulation of the AKT signaling pathway and decreased cell survival. As to expression, widely expressed. Low levels found in liver with slightly higher levels present in thymus and testis.

Its subcellular location is the cytoplasm. It is found in the nucleus. It localises to the cell membrane. The protein resides in the mitochondrion intermembrane space. The catalysed reaction is L-seryl-[protein] + ATP = O-phospho-L-seryl-[protein] + ADP + H(+). The enzyme catalyses L-threonyl-[protein] + ATP = O-phospho-L-threonyl-[protein] + ADP + H(+). Its activity is regulated as follows. Three specific sites, one in the kinase domain (Thr-308) and the two other ones in the C-terminal regulatory region (Ser-473 and Tyr-474), need to be phosphorylated for its full activation. Its function is as follows. AKT1 is one of 3 closely related serine/threonine-protein kinases (AKT1, AKT2 and AKT3) called the AKT kinase, and which regulate many processes including metabolism, proliferation, cell survival, growth and angiogenesis. This is mediated through serine and/or threonine phosphorylation of a range of downstream substrates. Over 100 substrate candidates have been reported so far, but for most of them, no isoform specificity has been reported. AKT is responsible of the regulation of glucose uptake by mediating insulin-induced translocation of the SLC2A4/GLUT4 glucose transporter to the cell surface. Phosphorylation of PTPN1 at 'Ser-50' negatively modulates its phosphatase activity preventing dephosphorylation of the insulin receptor and the attenuation of insulin signaling. Phosphorylation of TBC1D4 triggers the binding of this effector to inhibitory 14-3-3 proteins, which is required for insulin-stimulated glucose transport. AKT also regulates the storage of glucose in the form of glycogen by phosphorylating GSK3A at 'Ser-21' and GSK3B at 'Ser-9', resulting in inhibition of its kinase activity. Phosphorylation of GSK3 isoforms by AKT is also thought to be one mechanism by which cell proliferation is driven. AKT also regulates cell survival via the phosphorylation of MAP3K5 (apoptosis signal-related kinase). Phosphorylation of 'Ser-83' decreases MAP3K5 kinase activity stimulated by oxidative stress and thereby prevents apoptosis. AKT mediates insulin-stimulated protein synthesis by phosphorylating TSC2 at 'Ser-939' and 'Thr-1462', thereby activating the mTORC1 signaling pathway, and leading to both phosphorylation of 4E-BP1 and in activation of RPS6KB1. Also regulates the mTORC1 signaling pathway by catalyzing phosphorylation of CASTOR1 and DEPDC5. AKT plays a role as key modulator of the AKT-mTOR signaling pathway controlling the tempo of the process of newborn neurons integration during adult neurogenesis, including correct neuron positioning, dendritic development and synapse formation. Part of a positive feedback loop of mTORC2 signaling by mediating phosphorylation of MAPKAP1/SIN1, promoting mTORC2 activation. AKT is involved in the phosphorylation of members of the FOXO factors (Forkhead family of transcription factors), leading to binding of 14-3-3 proteins and cytoplasmic localization. In particular, FOXO1 is phosphorylated at 'Thr-24', 'Ser-256' and 'Ser-319'. FOXO3 and FOXO4 are phosphorylated on equivalent sites. AKT has an important role in the regulation of NF-kappa-B-dependent gene transcription and positively regulates the activity of CREB1 (cyclic AMP (cAMP)-response element binding protein). The phosphorylation of CREB1 induces the binding of accessory proteins that are necessary for the transcription of pro-survival genes such as BCL2 and MCL1. AKT phosphorylates 'Ser-454' on ATP citrate lyase (ACLY), thereby potentially regulating ACLY activity and fatty acid synthesis. Activates the 3B isoform of cyclic nucleotide phosphodiesterase (PDE3B) via phosphorylation of 'Ser-273', resulting in reduced cyclic AMP levels and inhibition of lipolysis. Phosphorylates PIKFYVE on 'Ser-318', which results in increased PI(3)P-5 activity. The Rho GTPase-activating protein DLC1 is another substrate and its phosphorylation is implicated in the regulation cell proliferation and cell growth. Signals downstream of phosphatidylinositol 3-kinase (PI(3)K) to mediate the effects of various growth factors such as platelet-derived growth factor (PDGF), epidermal growth factor (EGF), insulin and insulin-like growth factor 1 (IGF1). AKT mediates the antiapoptotic effects of IGF1. Essential for the SPATA13-mediated regulation of cell migration and adhesion assembly and disassembly. May be involved in the regulation of the placental development. Phosphorylates STK4/MST1 at 'Thr-120' and 'Thr-387' leading to inhibition of its: kinase activity, nuclear translocation, autophosphorylation and ability to phosphorylate FOXO3. Phosphorylates STK3/MST2 at 'Thr-117' and 'Thr-384' leading to inhibition of its: cleavage, kinase activity, autophosphorylation at Thr-180, binding to RASSF1 and nuclear translocation. Phosphorylates SRPK2 and enhances its kinase activity towards SRSF2 and ACIN1 and promotes its nuclear translocation. Phosphorylates RAF1 at 'Ser-259' and negatively regulates its activity. Phosphorylation of BAD stimulates its pro-apoptotic activity. Phosphorylates KAT6A at 'Thr-369' and this phosphorylation inhibits the interaction of KAT6A with PML and negatively regulates its acetylation activity towards p53/TP53. Phosphorylates palladin (PALLD), modulating cytoskeletal organization and cell motility. Phosphorylates prohibitin (PHB), playing an important role in cell metabolism and proliferation. Phosphorylates CDKN1A, for which phosphorylation at 'Thr-145' induces its release from CDK2 and cytoplasmic relocalization. These recent findings indicate that the AKT1 isoform has a more specific role in cell motility and proliferation. Phosphorylates CLK2 thereby controlling cell survival to ionizing radiation. Phosphorylates PCK1 at 'Ser-90', reducing the binding affinity of PCK1 to oxaloacetate and changing PCK1 into an atypical protein kinase activity using GTP as donor. Also acts as an activator of TMEM175 potassium channel activity in response to growth factors: forms the lysoK(GF) complex together with TMEM175 and acts by promoting TMEM175 channel activation, independently of its protein kinase activity. Acts as a negative regulator of the cGAS-STING pathway by mediating phosphorylation of CGAS during mitosis, leading to its inhibition. Acts as a regulator of mitochondrial calcium uptake by mediating phosphorylation of MICU1 in the mitochondrial intermembrane space, impairing MICU1 maturation. Acts as an inhibitor of tRNA methylation by mediating phosphorylation of the N-terminus of METTL1, thereby inhibiting METTL1 methyltransferase activity. In response to LPAR1 receptor pathway activation, phosphorylates Rabin8/RAB3IP which alters its activity and phosphorylates WDR44 which induces WDR44 binding to Rab11, thereby switching Rab11 vesicular function from preciliary trafficking to endocytic recycling. This Mus musculus (Mouse) protein is RAC-alpha serine/threonine-protein kinase (Akt1).